Here is a 332-residue protein sequence, read N- to C-terminus: Glyceraldehyde-3-phosphate dehydrogenase (332 aa).

NAD(+)-binding positions include Arg11–Ile12, Asp34, Arg78, and Ser120. D-glyceraldehyde 3-phosphate-binding positions include Ser151–Thr153, Thr182, Arg197, Thr210–Gly211, and Arg233. The active-site Nucleophile is the Cys152. Position 314 (Asn314) interacts with NAD(+).

This sequence belongs to the glyceraldehyde-3-phosphate dehydrogenase family. In terms of assembly, homotetramer.

It is found in the cytoplasm. It catalyses the reaction D-glyceraldehyde 3-phosphate + phosphate + NAD(+) = (2R)-3-phospho-glyceroyl phosphate + NADH + H(+). It participates in carbohydrate degradation; glycolysis; pyruvate from D-glyceraldehyde 3-phosphate: step 1/5. Its function is as follows. Catalyzes the oxidative phosphorylation of glyceraldehyde 3-phosphate (G3P) to 1,3-bisphosphoglycerate (BPG) using the cofactor NAD. The first reaction step involves the formation of a hemiacetal intermediate between G3P and a cysteine residue, and this hemiacetal intermediate is then oxidized to a thioester, with concomitant reduction of NAD to NADH. The reduced NADH is then exchanged with the second NAD, and the thioester is attacked by a nucleophilic inorganic phosphate to produce BPG. This is Glyceraldehyde-3-phosphate dehydrogenase (gap) from Kitasatospora aureofaciens (Streptomyces aureofaciens).